Here is a 64-residue protein sequence, read N- to C-terminus: Large ribosomal subunit protein uL30 (64 aa).

It belongs to the universal ribosomal protein uL30 family. In terms of assembly, part of the 50S ribosomal subunit.

The polypeptide is Large ribosomal subunit protein uL30 (Rhodopseudomonas palustris (strain BisB18)).